Reading from the N-terminus, the 390-residue chain is Branched-chain-amino-acid aminotransferase (390 aa).

At Lys-225 the chain carries N6-(pyridoxal phosphate)lysine.

Belongs to the class-IV pyridoxal-phosphate-dependent aminotransferase family. As to quaternary structure, homodimer. Pyridoxal 5'-phosphate serves as cofactor.

It carries out the reaction L-leucine + 2-oxoglutarate = 4-methyl-2-oxopentanoate + L-glutamate. The catalysed reaction is L-isoleucine + 2-oxoglutarate = (S)-3-methyl-2-oxopentanoate + L-glutamate. It catalyses the reaction L-valine + 2-oxoglutarate = 3-methyl-2-oxobutanoate + L-glutamate. In terms of biological role, catalyzes the first reaction in the catabolism of the essential branched chain amino acids leucine, isoleucine, and valine. This is Branched-chain-amino-acid aminotransferase from Monosiga brevicollis (Choanoflagellate).